Consider the following 197-residue polypeptide: Imidazoleglycerol-phosphate dehydratase (197 aa).

The protein belongs to the imidazoleglycerol-phosphate dehydratase family.

The protein resides in the cytoplasm. It catalyses the reaction D-erythro-1-(imidazol-4-yl)glycerol 3-phosphate = 3-(imidazol-4-yl)-2-oxopropyl phosphate + H2O. It participates in amino-acid biosynthesis; L-histidine biosynthesis; L-histidine from 5-phospho-alpha-D-ribose 1-diphosphate: step 6/9. The polypeptide is Imidazoleglycerol-phosphate dehydratase (Bradyrhizobium diazoefficiens (strain JCM 10833 / BCRC 13528 / IAM 13628 / NBRC 14792 / USDA 110)).